Here is a 148-residue protein sequence, read N- to C-terminus: Large ribosomal subunit protein uL15 (148 aa).

The interval 1–46 (MITIEDLKPTPGSNKKYKRLGRGQGSGKGKTAGKGHKGQKSRGTGK) is disordered. Residues 31–45 (TAGKGHKGQKSRGTG) are compositionally biased toward basic residues.

It belongs to the universal ribosomal protein uL15 family. Part of the 50S ribosomal subunit.

In terms of biological role, binds to the 23S rRNA. The sequence is that of Large ribosomal subunit protein uL15 from Fervidobacterium nodosum (strain ATCC 35602 / DSM 5306 / Rt17-B1).